The sequence spans 302 residues: Transmembrane protein 191C (302 aa).

2 disordered regions span residues 1–21 and 54–73; these read MAATQELLLQLQKDNRDGRQR and LRRRSQAAQPLQGEAREAAR. Positions 5–160 form a coiled coil; the sequence is QELLLQLQKD…EKLQQDALQT (156 aa). The helical transmembrane segment at 238-258 threads the bilayer; it reads VLGALQVLLTLPLLFLGLSLL.

Belongs to the TMEM191 family.

The protein localises to the membrane. The sequence is that of Transmembrane protein 191C from Homo sapiens (Human).